Here is a 723-residue protein sequence, read N- to C-terminus: Zinc finger CCCH domain-containing protein 11A (723 aa).

3 consecutive C3H1-type zinc fingers follow at residues Ser-2 to Ala-29, Leu-31 to Ile-57, and Lys-60 to Gly-87. Disordered stretches follow at residues Glu-142–Asp-208, Lys-223–Asn-256, Lys-404–Glu-428, Glu-450–Leu-526, and Val-565–Ser-681. The segment covering Ala-160–Glu-175 has biased composition (acidic residues). Residues Lys-376–Lys-411 are a coiled coil. The segment covering Pro-511–Gln-522 has biased composition (polar residues). Over residues Lys-609–Pro-620 the composition is skewed to low complexity. Residues Leu-637–Glu-649 are compositionally biased toward polar residues. The span at Gln-650–Ser-672 shows a compositional bias: low complexity.

It is found in the nucleus speckle. Functionally, through its association with TREX complex components, may participate in the export and post-transcriptional coordination of selected mRNA transcripts. Binds RNA. This Gallus gallus (Chicken) protein is Zinc finger CCCH domain-containing protein 11A (ZC3H11A).